The following is a 340-amino-acid chain: Uroporphyrinogen decarboxylase (340 aa).

Substrate is bound by residues 21–25 (RQAGR), phenylalanine 40, aspartate 71, tyrosine 147, serine 202, and histidine 316.

The protein belongs to the uroporphyrinogen decarboxylase family. Homodimer.

The protein resides in the cytoplasm. The catalysed reaction is uroporphyrinogen III + 4 H(+) = coproporphyrinogen III + 4 CO2. The protein operates within porphyrin-containing compound metabolism; protoporphyrin-IX biosynthesis; coproporphyrinogen-III from 5-aminolevulinate: step 4/4. In terms of biological role, catalyzes the decarboxylation of four acetate groups of uroporphyrinogen-III to yield coproporphyrinogen-III. This chain is Uroporphyrinogen decarboxylase, found in Helicobacter hepaticus (strain ATCC 51449 / 3B1).